The sequence spans 299 residues: Coenzyme PQQ synthesis protein B (299 aa).

This sequence belongs to the PqqB family.

It participates in cofactor biosynthesis; pyrroloquinoline quinone biosynthesis. In terms of biological role, may be involved in the transport of PQQ or its precursor to the periplasm. The chain is Coenzyme PQQ synthesis protein B from Xanthomonas axonopodis pv. citri (strain 306).